The primary structure comprises 908 residues: MYNNNNDGGGGGSANGNTMQQRRKTTTRSRSKQQQQQQCTSENVIEKNQTNGAQNERLHFRGSSKDSALSTPLLPRSRSTTSAINSPSPLCCNGGLSILNCCRDVNCHLNAPLRGSVESSRSRRSESRQSSLTATPTTTPKQASPSPTISERSRSCSGSRSRSCSCDGRLVDCHKHSAAAAAASTAAPQFTVNLSIDLFSWTLFLLAFCTRFYKLATPPHIVFDELHYGKYIAHYMRNIFFFDQHPPLGKQLIAGLVSLAGYDGNYTFSRIGAAYAPDVPIFWFRFIPALCGSLLAPAVYRLLLEARLHRWAAALGGLLVVLDNSLLTQSRFVLMESMLLLASTLGIACLLRFQRCRLGSFQWLCNGSAAGVLLACAGAVKYIGFLALALAGYLLCRHLWQLLYDASLTNRQLWMHALSRLLLFVGIPIAVYIGVFYVHFRTLHRAGPHDSIMTSAFQASLEGGLASITSGQPLAVVHGSQITLRHTHGRTCWLHSHAAVYPVRYKDKRGSSHQQQVTCYSFKDVNNWWIVKRPERDDLVVGEQPDVIQHGDVIQLVHGITSRALNSHDVAAPMTPQCQEVSCYIDYEIKMAGELLWRVEILNRNSEGDSWHAIKSEIRLVHESTGAALKFSGRQLPDWGFNQHEVVADRDQVHEDAIWNVEEHRYTKTQDQRERERQLLSAEMIPTKRTKLSFWAKLLELQTKMFWHGKHLQAHMYSSLPHEWPLMDKGIAYWLDSQSSAQIYLLGNVLIWYTASAGILVYATLLAFYAVRRRRLCFDVSQHEWQRFLMAGDTFFVGYMMHYLPYYFVDRTLFLHNYLPAFVFKLLLLCFVVEHLDYLLRRHCSGRGVHLVRVYRLALLLWLLAVGSVFVKFLPLSYGARKMTIEEVRRLRWKDTWDFILQKNYALN.

Disordered stretches follow at residues 1–85 (MYNN…SAIN) and 115–160 (GSVE…SGSR). Basic residues predominate over residues 21 to 31 (QRRKTTTRSRS). 2 stretches are compositionally biased toward polar residues: residues 39–54 (CTSE…NGAQ) and 132–149 (LTAT…SPTI). Residues 190 to 210 (FTVNLSIDLFSWTLFLLAFCT) traverse the membrane as a helical segment. N265 carries an N-linked (GlcNAc...) asparagine glycan. 5 helical membrane passes run 279–299 (VPIF…APAV), 311–328 (WAAA…SLLT), 331–351 (RFVL…ACLL), 370–390 (AGVL…ALAL), and 418–438 (LSRL…VFYV). MIR domains are found at residues 473 to 534 (PLAV…VKRP), 545 to 602 (PDVI…VEIL), and 608 to 664 (GDSW…VEEH). 4 helical membrane passes run 749 to 769 (VLIW…LAFY), 788 to 808 (FLMA…PYYF), 813 to 833 (LFLH…CFVV), and 857 to 877 (LALL…LPLS).

It belongs to the glycosyltransferase 39 family. Interacts with tw/POMT2.

Its subcellular location is the endoplasmic reticulum membrane. The catalysed reaction is a di-trans,poly-cis-dolichyl beta-D-mannosyl phosphate + L-seryl-[protein] = 3-O-(alpha-D-mannosyl)-L-seryl-[protein] + a di-trans,poly-cis-dolichyl phosphate + H(+). The enzyme catalyses a di-trans,poly-cis-dolichyl beta-D-mannosyl phosphate + L-threonyl-[protein] = 3-O-(alpha-D-mannosyl)-L-threonyl-[protein] + a di-trans,poly-cis-dolichyl phosphate + H(+). It participates in protein modification; protein glycosylation. In terms of biological role, rt/POMT1 and tw/POMT2 function as a protein O-mannosyltransferase in association with each other to generate and maintain normal muscle development. This chain is Protein O-mannosyltransferase 1, found in Drosophila pseudoobscura pseudoobscura (Fruit fly).